We begin with the raw amino-acid sequence, 401 residues long: Probable plasmid-partitioning protein ParB (401 aa).

Positions 232–272 (KTRGKENARDKAAAVKEEVKPSKKPKADNGEKTPKGRSHEE) are disordered.

Belongs to the ParB family.

The sequence is that of Probable plasmid-partitioning protein ParB from Xylella fastidiosa (strain 9a5c).